A 314-amino-acid polypeptide reads, in one-letter code: Olfactory receptor 10A3 (314 aa).

Residues Met-1–Val-25 are Extracellular-facing. Asn-5 carries N-linked (GlcNAc...) asparagine glycosylation. Residues Gln-26–Thr-46 form a helical membrane-spanning segment. The Cytoplasmic portion of the chain corresponds to Val-47 to Ser-54. Residues Leu-55 to Ala-75 traverse the membrane as a helical segment. Over Val-76 to Ala-99 the chain is Extracellular. Cys-97 and Cys-189 form a disulfide bridge. Residues Gln-100–Tyr-120 form a helical membrane-spanning segment. Residues Asp-121–Gly-139 are Cytoplasmic-facing. Residues Val-140–Thr-160 form a helical membrane-spanning segment. The Extracellular segment spans residues Thr-161–Ile-197. Residues Tyr-198 to Ser-217 traverse the membrane as a helical segment. Over Tyr-218–Ala-237 the chain is Cytoplasmic. Residues Phe-238 to Thr-258 traverse the membrane as a helical segment. Topologically, residues Tyr-259 to Lys-271 are extracellular. The helical transmembrane segment at Lys-272–Leu-292 threads the bilayer. Over Arg-293–Phe-314 the chain is Cytoplasmic.

It belongs to the G-protein coupled receptor 1 family.

The protein resides in the cell membrane. In terms of biological role, odorant receptor. The protein is Olfactory receptor 10A3 (OR10A3) of Homo sapiens (Human).